Here is a 305-residue protein sequence, read N- to C-terminus: Sulfate adenylyltransferase subunit 2 (305 aa).

It belongs to the PAPS reductase family. CysD subfamily. Heterodimer composed of CysD, the smaller subunit, and CysN.

The catalysed reaction is sulfate + ATP + H(+) = adenosine 5'-phosphosulfate + diphosphate. It functions in the pathway sulfur metabolism; hydrogen sulfide biosynthesis; sulfite from sulfate: step 1/3. With CysN forms the ATP sulfurylase (ATPS) that catalyzes the adenylation of sulfate producing adenosine 5'-phosphosulfate (APS) and diphosphate, the first enzymatic step in sulfur assimilation pathway. APS synthesis involves the formation of a high-energy phosphoric-sulfuric acid anhydride bond driven by GTP hydrolysis by CysN coupled to ATP hydrolysis by CysD. In Pseudomonas syringae pv. tomato (strain ATCC BAA-871 / DC3000), this protein is Sulfate adenylyltransferase subunit 2.